The following is a 213-amino-acid chain: Protein-L-isoaspartate O-methyltransferase (213 aa).

The active site involves serine 61.

This sequence belongs to the methyltransferase superfamily. L-isoaspartyl/D-aspartyl protein methyltransferase family.

The protein resides in the cytoplasm. It carries out the reaction [protein]-L-isoaspartate + S-adenosyl-L-methionine = [protein]-L-isoaspartate alpha-methyl ester + S-adenosyl-L-homocysteine. In terms of biological role, catalyzes the methyl esterification of L-isoaspartyl residues in peptides and proteins that result from spontaneous decomposition of normal L-aspartyl and L-asparaginyl residues. It plays a role in the repair and/or degradation of damaged proteins. In Petrotoga mobilis (strain DSM 10674 / SJ95), this protein is Protein-L-isoaspartate O-methyltransferase.